The following is a 227-amino-acid chain: Lipoprotein-releasing system ATP-binding protein LolD (227 aa).

The 221-residue stretch at 7–227 (LKLTGVERHY…TISDGKVVEF (221 aa)) folds into the ABC transporter domain. Residue 43 to 50 (APSGTGKS) coordinates ATP.

The protein belongs to the ABC transporter superfamily. Lipoprotein translocase (TC 3.A.1.125) family. The complex is composed of two ATP-binding proteins (LolD) and two transmembrane proteins (LolC and LolE).

It is found in the cell inner membrane. Functionally, part of the ABC transporter complex LolCDE involved in the translocation of mature outer membrane-directed lipoproteins, from the inner membrane to the periplasmic chaperone, LolA. Responsible for the formation of the LolA-lipoprotein complex in an ATP-dependent manner. This chain is Lipoprotein-releasing system ATP-binding protein LolD, found in Rhizobium etli (strain ATCC 51251 / DSM 11541 / JCM 21823 / NBRC 15573 / CFN 42).